Reading from the N-terminus, the 91-residue chain is UPF0250 protein PputW619_0619 (91 aa).

The protein belongs to the UPF0250 family.

In Pseudomonas putida (strain W619), this protein is UPF0250 protein PputW619_0619.